A 420-amino-acid chain; its full sequence is Protein BDLF2 (420 aa).

Disordered regions lie at residues 1–21 (MVDE…SREE) and 64–129 (AAAV…GGQR). Residues 1–184 (MVDEQVAVEH…AETLAEPPRC (184 aa)) lie on the Intravirion side of the membrane. The span at 90 to 108 (TKTNTQDQNQNQTTRTRTN) shows a compositional bias: low complexity. Residues 185–205 (FMLSFVFIYYCCYLAFLALLA) traverse the membrane as a helical; Signal-anchor for type II membrane protein segment. Residues 206 to 420 (FGFNPLFLPS…LEEVMYVMVQ (215 aa)) are Virion surface-facing. 6 N-linked (GlcNAc...) asparagine; by host glycosylation sites follow: N258, N264, N300, N304, N371, and N384.

The protein belongs to the herpesviridae BDLF2 family. Interacts with BMRF2.

It is found in the virion membrane. Its function is as follows. Rearranges cellular actin to increase intercellular contacts and thereby promote virus cell-to-cell spreading. Induce the outgrowth of long, branched plasma membrane fronds to create intercellular network for virion traffic. The fronds are actin based and RhoA-dependent. The sequence is that of Protein BDLF2 from Homo sapiens (Human).